Reading from the N-terminus, the 515-residue chain is Meiotically up-regulated gene 68 protein (515 aa).

The interval 165–204 is disordered; the sequence is LHSIESERNESSLSLDSGESEKKSEEDNGNGEQNYIPEQY.

Its function is as follows. Has a role in meiosis. This Schizosaccharomyces pombe (strain 972 / ATCC 24843) (Fission yeast) protein is Meiotically up-regulated gene 68 protein (mug68).